The following is a 153-amino-acid chain: Prostaglandin E synthase (153 aa).

The Lumenal portion of the chain corresponds to 1–13 (MPPPVLALVSGQA). Residues 14–42 (LPAFLLCSTLLVIKMYVVAVITGQVRLRK) traverse the membrane as a helical segment. A glutathione-binding site is contributed by arginine 39. The Cytoplasmic segment spans residues 43–61 (KAFANPEDALRHGGLQYCR). A helical transmembrane segment spans residues 62–91 (SDQDVDRCLRAHRNDMETIYPFLFLGFVYS). 74-78 (RNDME) lines the glutathione pocket. Topologically, residues 92–96 (FLGPD) are lumenal. Residues 97 to 120 (PFIAQMHFLVFFLGRMVHTVAYLG) traverse the membrane as a helical segment. 2 residues coordinate glutathione: histidine 114 and tyrosine 118. The Cytoplasmic segment spans residues 121–124 (KLRA). A helical transmembrane segment spans residues 125-153 (PTRSLAYTVAQLPCASMALQIVWEAACHL). Residue 127 to 131 (RSLAY) coordinates glutathione.

Belongs to the MAPEG family. In terms of assembly, homotrimer. Glutathione is required as a cofactor.

The protein resides in the membrane. It localises to the cytoplasm. The protein localises to the perinuclear region. The catalysed reaction is prostaglandin H2 = prostaglandin E2. It catalyses the reaction 2-glyceryl-prostaglandin H2 = 2-glyceryl-prostaglandin E2. The enzyme catalyses prostaglandin G2 = (15S)-15-hydroperoxy-prostaglandin E2. It carries out the reaction 1-chloro-2,4-dinitrobenzene + glutathione = 2,4-dinitrophenyl-S-glutathione + chloride + H(+). The catalysed reaction is (5S)-hydroperoxy-(6E,8Z,11Z,14Z)-eicosatetraenoate + 2 glutathione = (5S)-hydroxy-(6E,8Z,11Z,14Z)-eicosatetraenoate + glutathione disulfide + H2O. The protein operates within lipid metabolism; prostaglandin biosynthesis. In terms of biological role, terminal enzyme of the cyclooxygenase (COX)-2-mediated prostaglandin E2 (PGE2) biosynthetic pathway. Catalyzes the glutathione-dependent oxidoreduction of prostaglandin endoperoxide H2 (PGH2) to prostaglandin E2 (PGE2) in response to inflammatory stimuli. Plays a key role in inflammation response, fever and pain. Also catalyzes the oxidoreduction of endocannabinoids into prostaglandin glycerol esters and PGG2 into 15-hydroperoxy-PGE2. In addition, displays low glutathione transferase and glutathione-dependent peroxidase activities, toward 1-chloro-2,4-dinitrobenzene and 5-hydroperoxyicosatetraenoic acid (5-HPETE), respectively. The sequence is that of Prostaglandin E synthase (PTGES) from Canis lupus familiaris (Dog).